A 90-amino-acid chain; its full sequence is Co-chaperonin GroES (90 aa).

Belongs to the GroES chaperonin family. As to quaternary structure, heptamer of 7 subunits arranged in a ring. Interacts with the chaperonin GroEL.

Its subcellular location is the cytoplasm. Functionally, together with the chaperonin GroEL, plays an essential role in assisting protein folding. The GroEL-GroES system forms a nano-cage that allows encapsulation of the non-native substrate proteins and provides a physical environment optimized to promote and accelerate protein folding. GroES binds to the apical surface of the GroEL ring, thereby capping the opening of the GroEL channel. This Fusobacterium nucleatum subsp. nucleatum (strain ATCC 25586 / DSM 15643 / BCRC 10681 / CIP 101130 / JCM 8532 / KCTC 2640 / LMG 13131 / VPI 4355) protein is Co-chaperonin GroES.